The following is a 105-amino-acid chain: Replication initiation control protein YabA (105 aa).

Residues H79, C81, C95, and C98 each contribute to the Zn(2+) site.

Belongs to the YabA family. Homotetramer. Interacts with both DnaA and DnaN, acting as a bridge between these two proteins. The cofactor is Zn(2+).

It localises to the cytoplasm. The protein resides in the nucleoid. Involved in control of chromosome replication initiation. Inhibits the cooperative binding of DnaA to the oriC region, thus negatively regulating initiation of chromosome replication. Inhibits the ability of DnaA-ATP to form a helix on DNA; does not disassemble preformed DnaA-DNA helices. Decreases the residence time of DnaA on the chromosome at its binding sites (oriC, replication forks and promoter-binding sites). Tethers DnaA to the replication machinery via the DNA polymerase beta sliding clamp subunit (dnaN). Associates with oriC and other DnaA targets on the chromosome in a DnaA-dependent manner. The protein is Replication initiation control protein YabA of Streptococcus pneumoniae serotype 2 (strain D39 / NCTC 7466).